The primary structure comprises 83 residues: Mitochondrial import inner membrane translocase subunit Tim8 B (83 aa).

Residue A2 is modified to N-acetylalanine. The Twin CX3C motif motif lies at 36-59 (CWDKCVEKPGNRLDSRTENCLSSC). 2 disulfides stabilise this stretch: C36–C59 and C40–C55.

The protein belongs to the small Tim family. Heterohexamer; possibly composed of 3 copies of TIMM8B and 3 copies of TIMM13, named soluble 70 kDa complex. Associates with the TIM22 complex, whose core is composed of TIMM22.

Its subcellular location is the mitochondrion inner membrane. Functionally, probable mitochondrial intermembrane chaperone that participates in the import and insertion of some multi-pass transmembrane proteins into the mitochondrial inner membrane. Also required for the transfer of beta-barrel precursors from the TOM complex to the sorting and assembly machinery (SAM complex) of the outer membrane. Acts as a chaperone-like protein that protects the hydrophobic precursors from aggregation and guide them through the mitochondrial intermembrane space. The chain is Mitochondrial import inner membrane translocase subunit Tim8 B (TIMM8B) from Bos taurus (Bovine).